A 446-amino-acid chain; its full sequence is Methanogenesis regulatory protein FilR1 (446 aa).

The Response regulatory domain occupies 297-416 (DVMIVEDDLG…QRLPEIAEEA (120 aa)). A 4-aspartylphosphate modification is found at D350.

Post-translationally, phosphorylated by FilI.

Its function is as follows. Member of the two-component regulatory system FilI/FilRs, which is involved in the regulation of methanogenesis. Regulates its own expression, expression of the filI-filR2 operon, and of genes involved in methanogenesis such as acs1, acs4 and mtrABC. Acts by binding to the promoters. This Methanothrix harundinacea (strain 6Ac) (Methanosaeta harundinacea) protein is Methanogenesis regulatory protein FilR1.